The following is a 328-amino-acid chain: dITP/XTP pyrophosphatase (328 aa).

The tract at residues 1 to 129 (MSEKIYEYKD…ATSEQGFGDT (129 aa)) is unknown. The segment at 130 to 324 (ILIATRNEGK…KLMEVFPAWQ (195 aa)) is NTP pyrophosphatase. 134 to 139 (TRNEGK) provides a ligand contact to substrate. D196 functions as the Proton acceptor in the catalytic mechanism. D196 is a Mg(2+) binding site. Substrate-binding positions include S197, 280–283 (FGYD), K303, and 308–309 (HR).

Belongs to the HAM1 NTPase family. As to quaternary structure, homodimer. It depends on Mg(2+) as a cofactor.

It catalyses the reaction XTP + H2O = XMP + diphosphate + H(+). It carries out the reaction dITP + H2O = dIMP + diphosphate + H(+). The enzyme catalyses ITP + H2O = IMP + diphosphate + H(+). Its function is as follows. Pyrophosphatase that catalyzes the hydrolysis of nucleoside triphosphates to their monophosphate derivatives, with a high preference for the non-canonical purine nucleotides XTP (xanthosine triphosphate), dITP (deoxyinosine triphosphate) and ITP. Seems to function as a house-cleaning enzyme that removes non-canonical purine nucleotides from the nucleotide pool, thus preventing their incorporation into DNA/RNA and avoiding chromosomal lesions. The sequence is that of dITP/XTP pyrophosphatase from Streptococcus pyogenes serotype M6 (strain ATCC BAA-946 / MGAS10394).